The sequence spans 362 residues: Chorismate synthase (362 aa).

Residues Arg-48 and Arg-54 each coordinate NADP(+). Residues 125 to 127 (RSS), 238 to 239 (NA), Gly-278, 293 to 297 (KPTSS), and Arg-319 each bind FMN.

It belongs to the chorismate synthase family. In terms of assembly, homotetramer. Requires FMNH2 as cofactor.

It carries out the reaction 5-O-(1-carboxyvinyl)-3-phosphoshikimate = chorismate + phosphate. It participates in metabolic intermediate biosynthesis; chorismate biosynthesis; chorismate from D-erythrose 4-phosphate and phosphoenolpyruvate: step 7/7. Its function is as follows. Catalyzes the anti-1,4-elimination of the C-3 phosphate and the C-6 proR hydrogen from 5-enolpyruvylshikimate-3-phosphate (EPSP) to yield chorismate, which is the branch point compound that serves as the starting substrate for the three terminal pathways of aromatic amino acid biosynthesis. This reaction introduces a second double bond into the aromatic ring system. In Aeromonas salmonicida (strain A449), this protein is Chorismate synthase.